The primary structure comprises 427 residues: 3-phosphoshikimate 1-carboxyvinyltransferase (427 aa).

Residues Lys-23, Ser-24, and Arg-28 each contribute to the 3-phosphoshikimate site. Lys-23 is a phosphoenolpyruvate binding site. 2 residues coordinate phosphoenolpyruvate: Gly-97 and Arg-125. 3-phosphoshikimate is bound by residues Ser-170, Ser-171, Gln-172, Ser-198, Asp-314, Asn-337, and Lys-341. Gln-172 serves as a coordination point for phosphoenolpyruvate. Asp-314 functions as the Proton acceptor in the catalytic mechanism. The phosphoenolpyruvate site is built by Arg-345, Arg-387, and Lys-412.

This sequence belongs to the EPSP synthase family. In terms of assembly, monomer.

It is found in the cytoplasm. It catalyses the reaction 3-phosphoshikimate + phosphoenolpyruvate = 5-O-(1-carboxyvinyl)-3-phosphoshikimate + phosphate. It functions in the pathway metabolic intermediate biosynthesis; chorismate biosynthesis; chorismate from D-erythrose 4-phosphate and phosphoenolpyruvate: step 6/7. Its function is as follows. Catalyzes the transfer of the enolpyruvyl moiety of phosphoenolpyruvate (PEP) to the 5-hydroxyl of shikimate-3-phosphate (S3P) to produce enolpyruvyl shikimate-3-phosphate and inorganic phosphate. The chain is 3-phosphoshikimate 1-carboxyvinyltransferase from Buchnera aphidicola subsp. Acyrthosiphon pisum (strain 5A).